A 473-amino-acid polypeptide reads, in one-letter code: Arginine biosynthesis bifunctional protein ArgJ, mitochondrial (473 aa).

6 residues coordinate substrate: Thr201, Lys230, Thr241, Glu328, Asn468, and Thr473. Residue Thr241 is the Nucleophile of the active site.

The protein belongs to the ArgJ family. In terms of assembly, heterodimer of an alpha and a beta chain. The alpha and beta chains are autoproteolytically processed from a single precursor protein within the mitochondrion.

It localises to the mitochondrion matrix. It catalyses the reaction N(2)-acetyl-L-ornithine + L-glutamate = N-acetyl-L-glutamate + L-ornithine. The enzyme catalyses L-glutamate + acetyl-CoA = N-acetyl-L-glutamate + CoA + H(+). It functions in the pathway amino-acid biosynthesis; L-arginine biosynthesis; L-ornithine and N-acetyl-L-glutamate from L-glutamate and N(2)-acetyl-L-ornithine (cyclic): step 1/1. It participates in amino-acid biosynthesis; L-arginine biosynthesis; N(2)-acetyl-L-ornithine from L-glutamate: step 1/4. In terms of biological role, catalyzes two activities which are involved in the cyclic version of arginine biosynthesis: the synthesis of acetylglutamate from glutamate and acetyl-CoA, and of ornithine by transacetylation between acetylornithine and glutamate. The sequence is that of Arginine biosynthesis bifunctional protein ArgJ, mitochondrial from Blastomyces gilchristii (strain SLH14081) (Blastomyces dermatitidis).